The sequence spans 469 residues: Glutamate--tRNA ligase (469 aa).

Residues 11-21 (PSPTGFIHLGN) carry the 'HIGH' region motif. The 'KMSKS' region signature appears at 243–247 (KMSKR). Residue lysine 246 participates in ATP binding.

Belongs to the class-I aminoacyl-tRNA synthetase family. Glutamate--tRNA ligase type 1 subfamily. As to quaternary structure, monomer.

The protein localises to the cytoplasm. It carries out the reaction tRNA(Glu) + L-glutamate + ATP = L-glutamyl-tRNA(Glu) + AMP + diphosphate. Its function is as follows. Catalyzes the attachment of glutamate to tRNA(Glu) in a two-step reaction: glutamate is first activated by ATP to form Glu-AMP and then transferred to the acceptor end of tRNA(Glu). This chain is Glutamate--tRNA ligase, found in Burkholderia cenocepacia (strain ATCC BAA-245 / DSM 16553 / LMG 16656 / NCTC 13227 / J2315 / CF5610) (Burkholderia cepacia (strain J2315)).